The sequence spans 166 residues: Photosystem I assembly protein Ycf3 (166 aa).

TPR repeat units follow at residues 35–68 (AFTY…EIDA), 72–105 (SYML…NPRL), and 120–153 (GEQA…SPTS).

The protein belongs to the Ycf3 family.

Its subcellular location is the plastid. It is found in the chloroplast thylakoid membrane. Its function is as follows. Essential for the assembly of the photosystem I (PSI) complex. May act as a chaperone-like factor to guide the assembly of the PSI subunits. The chain is Photosystem I assembly protein Ycf3 from Bigelowiella natans (Pedinomonas minutissima).